A 68-amino-acid polypeptide reads, in one-letter code: UPF0337 protein RB10934 (68 aa).

Belongs to the UPF0337 (CsbD) family.

The protein is UPF0337 protein RB10934 of Rhodopirellula baltica (strain DSM 10527 / NCIMB 13988 / SH1).